A 209-amino-acid chain; its full sequence is Putative BTB/POZ domain-containing protein At2g40450 (209 aa).

Residues 24-98 (ADVRLKAGDS…IYRVDGSICS (75 aa)) form the BTB domain.

The protein operates within protein modification; protein ubiquitination. In terms of biological role, may act as a substrate-specific adapter of an E3 ubiquitin-protein ligase complex (CUL3-RBX1-BTB) which mediates the ubiquitination and subsequent proteasomal degradation of target proteins. The sequence is that of Putative BTB/POZ domain-containing protein At2g40450 from Arabidopsis thaliana (Mouse-ear cress).